The sequence spans 86 residues: Putative sodium channel toxin Ts17 (86 aa).

Residues 1 to 19 form the signal peptide; the sequence is MNYFIFLVVACLLTAGTEG. The region spanning 21–82 is the LCN-type CS-alpha/beta domain; it reads KDGYPVEGDN…EPTKTSGRCK (62 aa). Intrachain disulfides connect C31-C81, C35-C57, C43-C64, and C47-C66. P83 is subject to Proline amide.

It belongs to the long (4 C-C) scorpion toxin superfamily. Sodium channel inhibitor family. Alpha subfamily. Expressed by the venom gland.

Its subcellular location is the secreted. Its function is as follows. Alpha toxins bind voltage-independently at site-3 of sodium channels (Nav) and inhibit the inactivation of the activated channels, thereby blocking neuronal transmission. The sequence is that of Putative sodium channel toxin Ts17 from Tityus serrulatus (Brazilian scorpion).